A 361-amino-acid polypeptide reads, in one-letter code: MQQETQAPPLLLLYARSISKTNYIFRVSAMDENYENFTDAYEEMWGFDANETNTFASSEVRVISLVVYCLTFLLGVPGNSFVIFIAGMKMKRTVNTIWFLNLATADLLCCLSVPLTVAEILLDHHWPYGYAMCKILPSVIVISMFASVFTLNIISLDRFTQVITPVWAQNHRSLLLARLSCVAVWILALLLSLPFMILRRTYEEFNMTVCTFDDDDFTTYGALSIVRFVFGFLIPLMSIVTCYGIIARKLGSRHFRSGRAFRIMLAVIVAFFLCWMPYHVLDLIRSYGGESSSMVALKVDPLAISLAYVNSCLNPVLYVFMGQDFKNKVQLSLRRVFERAFSEEGTQISRSTQSQQVHSVL.

The Extracellular segment spans residues 1-64 (MQQETQAPPL…FASSEVRVIS (64 aa)). Residues Asn-36 and Asn-50 are each glycosylated (N-linked (GlcNAc...) asparagine). Residues 65–85 (LVVYCLTFLLGVPGNSFVIFI) traverse the membrane as a helical segment. The Cytoplasmic portion of the chain corresponds to 86–96 (AGMKMKRTVNT). A helical transmembrane segment spans residues 97–117 (IWFLNLATADLLCCLSVPLTV). Topologically, residues 118-134 (AEILLDHHWPYGYAMCK) are extracellular. Cys-133 and Cys-210 form a disulfide bridge. The chain crosses the membrane as a helical span at residues 135 to 155 (ILPSVIVISMFASVFTLNIIS). At 156 to 177 (LDRFTQVITPVWAQNHRSLLLA) the chain is on the cytoplasmic side. A helical membrane pass occupies residues 178-198 (RLSCVAVWILALLLSLPFMIL). The Extracellular portion of the chain corresponds to 199 to 224 (RRTYEEFNMTVCTFDDDDFTTYGALS). A helical transmembrane segment spans residues 225–245 (IVRFVFGFLIPLMSIVTCYGI). The Cytoplasmic portion of the chain corresponds to 246–262 (IARKLGSRHFRSGRAFR). The helical transmembrane segment at 263 to 283 (IMLAVIVAFFLCWMPYHVLDL) threads the bilayer. The Extracellular segment spans residues 284-301 (IRSYGGESSSMVALKVDP). The helical transmembrane segment at 302–322 (LAISLAYVNSCLNPVLYVFMG) threads the bilayer. Over 323-361 (QDFKNKVQLSLRRVFERAFSEEGTQISRSTQSQQVHSVL) the chain is Cytoplasmic.

The protein belongs to the G-protein coupled receptor 1 family.

It localises to the cell membrane. Its function is as follows. Receptor for the chemotactic and inflammatory peptide anaphylatoxin C3a. This receptor stimulates chemotaxis, granule enzyme release and superoxide anion production. The chain is C3a anaphylatoxin chemotactic receptor (c3ar1) from Danio rerio (Zebrafish).